A 342-amino-acid polypeptide reads, in one-letter code: Inositol 2-dehydrogenase 2 (342 aa).

This sequence belongs to the Gfo/Idh/MocA family. As to quaternary structure, homotetramer.

The catalysed reaction is myo-inositol + NAD(+) = scyllo-inosose + NADH + H(+). Functionally, involved in the oxidation of myo-inositol (MI) to 2-keto-myo-inositol (2KMI or 2-inosose). This is Inositol 2-dehydrogenase 2 from Mycolicibacterium vanbaalenii (strain DSM 7251 / JCM 13017 / BCRC 16820 / KCTC 9966 / NRRL B-24157 / PYR-1) (Mycobacterium vanbaalenii).